Here is a 285-residue protein sequence, read N- to C-terminus: Sulfotransferase 2A6 (285 aa).

Residue 44–49 (KSGTNW) participates in 3'-phosphoadenylyl sulfate binding. The active-site Proton acceptor is the H99. 3'-phosphoadenylyl sulfate-binding positions include R121, S129, Y184, 218–223 (SSFQAM), and 247–249 (RKG).

The protein belongs to the sulfotransferase 1 family. Oligomer.

It is found in the cytoplasm. Its subcellular location is the cytosol. It carries out the reaction an alcohol + 3'-phosphoadenylyl sulfate = an alkyl sulfate + adenosine 3',5'-bisphosphate + H(+). The catalysed reaction is glycolithocholate + 3'-phosphoadenylyl sulfate = sulfoglycolithocholate + adenosine 3',5'-bisphosphate + H(+). The enzyme catalyses taurolithocholate + 3'-phosphoadenylyl sulfate = taurolithocholate 3-sulfate + adenosine 3',5'-bisphosphate + H(+). It catalyses the reaction 3beta-hydroxyandrost-5-en-17-one + 3'-phosphoadenylyl sulfate = dehydroepiandrosterone 3-sulfate + adenosine 3',5'-bisphosphate + H(+). Sulfotransferase that utilizes 3'-phospho-5'-adenylyl sulfate (PAPS) as sulfonate donor to catalyze the sulfonation of the hydroxyl group of hydroxysteroids and bile acids. In Mus musculus (Mouse), this protein is Sulfotransferase 2A6.